The primary structure comprises 242 residues: Ubiquitin-conjugating enzyme E2 6 (242 aa).

The Cytoplasmic segment spans residues 1–220; that stretch reads MASRQSQKRL…HSTPSFGVQR (220 aa). Residues 5–156 enclose the UBC core domain; that stretch reads QSQKRLTKEY…NQRFTKQFPD (152 aa). Residue C87 is the Glycyl thioester intermediate of the active site. The interval 170-190 is disordered; sequence AREQAAATTDSTDPEKPFDVR. Residues 221 to 240 traverse the membrane as a helical segment; sequence FTLVGVVVAAFIAAYFNFFS.

The protein belongs to the ubiquitin-conjugating enzyme family.

It is found in the endoplasmic reticulum membrane. The enzyme catalyses S-ubiquitinyl-[E1 ubiquitin-activating enzyme]-L-cysteine + [E2 ubiquitin-conjugating enzyme]-L-cysteine = [E1 ubiquitin-activating enzyme]-L-cysteine + S-ubiquitinyl-[E2 ubiquitin-conjugating enzyme]-L-cysteine.. It functions in the pathway protein modification; protein ubiquitination. In terms of biological role, catalyzes the covalent attachment of ubiquitin to other proteins. Functions in degradation of misfolded or regulated proteins localized in the endoplasmic reticulum (ER) lumen or membrane via the ubiquitin-proteasome system. Cognate E2 conjugating enzyme for the DOA10 ubiquitin ligase complex, which is part of the ERAD-C pathway responsible for the rapid degradation of membrane proteins with misfolded cytoplasmic domains. In Debaryomyces hansenii (strain ATCC 36239 / CBS 767 / BCRC 21394 / JCM 1990 / NBRC 0083 / IGC 2968) (Yeast), this protein is Ubiquitin-conjugating enzyme E2 6 (UBC6).